The chain runs to 357 residues: N-acetyl-gamma-glutamyl-phosphate reductase (357 aa).

Cysteine 151 is an active-site residue.

It belongs to the NAGSA dehydrogenase family. Type 1 subfamily.

Its subcellular location is the cytoplasm. The catalysed reaction is N-acetyl-L-glutamate 5-semialdehyde + phosphate + NADP(+) = N-acetyl-L-glutamyl 5-phosphate + NADPH + H(+). It functions in the pathway amino-acid biosynthesis; L-arginine biosynthesis; N(2)-acetyl-L-ornithine from L-glutamate: step 3/4. Its function is as follows. Catalyzes the NADPH-dependent reduction of N-acetyl-5-glutamyl phosphate to yield N-acetyl-L-glutamate 5-semialdehyde. The sequence is that of N-acetyl-gamma-glutamyl-phosphate reductase from Corynebacterium kroppenstedtii (strain DSM 44385 / JCM 11950 / CIP 105744 / CCUG 35717).